The primary structure comprises 477 residues: FAD-dependent monooxygenase paxM (477 aa).

The chain crosses the membrane as a helical span at residues 4-24 (AEFQVIIVGGSIGGLTLAHCL). Residues E35, G49, and R108 each coordinate FAD. Residue R195 is part of the active site. 2 residues coordinate FAD: D308 and A321. Residues 446-466 (LMIYLFGLTIVYTSLTMMFDL) traverse the membrane as a helical segment.

It belongs to the paxM FAD-dependent monooxygenase family. FAD serves as cofactor.

Its subcellular location is the membrane. The protein operates within secondary metabolite biosynthesis. FAD-dependent monooxygenase; part of the gene cluster that mediates the biosynthesis of paxilline, a mycotoxin that acts as an inhibitor of mammalian maxi-K channels. PaxG, the geranylgeranyl diphosphate (GGPP) synthase is proposed to catalyze the first step in paxilline biosynthesis. Condensation of indole-3-glycerol phosphate with GGPP by paxC then forms 3-geranylgeranylindole (3-GGI), followed by epoxidation and cyclization of this intermediate (by paxM and paxB) to form paspaline. Paspaline is subsequently converted to 13-desoxypaxilline by paxP, the latter being then converted to paxilline by paxQ. Finally paxilline can be mono- and di-prenylated by paxD. The chain is FAD-dependent monooxygenase paxM from Penicillium paxilli.